The primary structure comprises 354 residues: NADH-quinone oxidoreductase subunit H (354 aa).

8 helical membrane passes run 25-45 (LVRI…LILW), 91-111 (WLYL…WAVI), 126-146 (LLYA…AGWA), 170-190 (MGFA…SEIV), 205-225 (FLSW…ISGI), 253-273 (MAFA…SALA), 290-310 (FIPG…VFIW), and 330-350 (VFLP…MSPL).

Belongs to the complex I subunit 1 family. As to quaternary structure, NDH-1 is composed of 14 different subunits. Subunits NuoA, H, J, K, L, M, N constitute the membrane sector of the complex.

It localises to the cell inner membrane. It catalyses the reaction a quinone + NADH + 5 H(+)(in) = a quinol + NAD(+) + 4 H(+)(out). NDH-1 shuttles electrons from NADH, via FMN and iron-sulfur (Fe-S) centers, to quinones in the respiratory chain. The immediate electron acceptor for the enzyme in this species is believed to be ubiquinone. Couples the redox reaction to proton translocation (for every two electrons transferred, four hydrogen ions are translocated across the cytoplasmic membrane), and thus conserves the redox energy in a proton gradient. This subunit may bind ubiquinone. This chain is NADH-quinone oxidoreductase subunit H, found in Burkholderia thailandensis (strain ATCC 700388 / DSM 13276 / CCUG 48851 / CIP 106301 / E264).